A 344-amino-acid polypeptide reads, in one-letter code: Anthranilate phosphoribosyltransferase (344 aa).

Residues glycine 86, 89–90, threonine 94, 96–99, 114–122, and serine 126 contribute to the 5-phospho-alpha-D-ribose 1-diphosphate site; these read GD, NIST, and KHGNKSASG. Glycine 86 is a binding site for anthranilate. Serine 98 provides a ligand contact to Mg(2+). Residue asparagine 117 participates in anthranilate binding. An anthranilate-binding site is contributed by arginine 172. Aspartate 231 and glutamate 232 together coordinate Mg(2+).

This sequence belongs to the anthranilate phosphoribosyltransferase family. In terms of assembly, homodimer. Mg(2+) serves as cofactor.

The catalysed reaction is N-(5-phospho-beta-D-ribosyl)anthranilate + diphosphate = 5-phospho-alpha-D-ribose 1-diphosphate + anthranilate. Its pathway is amino-acid biosynthesis; L-tryptophan biosynthesis; L-tryptophan from chorismate: step 2/5. Catalyzes the transfer of the phosphoribosyl group of 5-phosphorylribose-1-pyrophosphate (PRPP) to anthranilate to yield N-(5'-phosphoribosyl)-anthranilate (PRA). The chain is Anthranilate phosphoribosyltransferase from Prochlorococcus marinus (strain MIT 9301).